The following is a 291-amino-acid chain: NAD kinase (291 aa).

Aspartate 55 serves as the catalytic Proton acceptor. NAD(+)-binding positions include 55–56, arginine 60, 130–131, aspartate 160, and 171–176; these read DG, NE, and TAYAFS.

It belongs to the NAD kinase family. A divalent metal cation is required as a cofactor.

The protein resides in the cytoplasm. It catalyses the reaction NAD(+) + ATP = ADP + NADP(+) + H(+). Involved in the regulation of the intracellular balance of NAD and NADP, and is a key enzyme in the biosynthesis of NADP. Catalyzes specifically the phosphorylation on 2'-hydroxyl of the adenosine moiety of NAD to yield NADP. This is NAD kinase from Corynebacterium glutamicum (strain ATCC 13032 / DSM 20300 / JCM 1318 / BCRC 11384 / CCUG 27702 / LMG 3730 / NBRC 12168 / NCIMB 10025 / NRRL B-2784 / 534).